The primary structure comprises 449 residues: Glucose-6-phosphate isomerase (449 aa).

Glutamate 291 (proton donor) is an active-site residue. Active-site residues include histidine 312 and lysine 426.

Belongs to the GPI family.

It localises to the cytoplasm. The catalysed reaction is alpha-D-glucose 6-phosphate = beta-D-fructose 6-phosphate. The protein operates within carbohydrate biosynthesis; gluconeogenesis. It functions in the pathway carbohydrate degradation; glycolysis; D-glyceraldehyde 3-phosphate and glycerone phosphate from D-glucose: step 2/4. Catalyzes the reversible isomerization of glucose-6-phosphate to fructose-6-phosphate. The chain is Glucose-6-phosphate isomerase from Streptococcus pyogenes serotype M12 (strain MGAS2096).